The chain runs to 251 residues: Ubiquinone/menaquinone biosynthesis C-methyltransferase UbiE (251 aa).

Residues T74, D95, 123-124, and S140 contribute to the S-adenosyl-L-methionine site; that span reads NA.

It belongs to the class I-like SAM-binding methyltransferase superfamily. MenG/UbiE family.

It carries out the reaction a 2-demethylmenaquinol + S-adenosyl-L-methionine = a menaquinol + S-adenosyl-L-homocysteine + H(+). The catalysed reaction is a 2-methoxy-6-(all-trans-polyprenyl)benzene-1,4-diol + S-adenosyl-L-methionine = a 5-methoxy-2-methyl-3-(all-trans-polyprenyl)benzene-1,4-diol + S-adenosyl-L-homocysteine + H(+). It functions in the pathway quinol/quinone metabolism; menaquinone biosynthesis; menaquinol from 1,4-dihydroxy-2-naphthoate: step 2/2. The protein operates within cofactor biosynthesis; ubiquinone biosynthesis. Its function is as follows. Methyltransferase required for the conversion of demethylmenaquinol (DMKH2) to menaquinol (MKH2) and the conversion of 2-polyprenyl-6-methoxy-1,4-benzoquinol (DDMQH2) to 2-polyprenyl-3-methyl-6-methoxy-1,4-benzoquinol (DMQH2). This chain is Ubiquinone/menaquinone biosynthesis C-methyltransferase UbiE, found in Citrobacter koseri (strain ATCC BAA-895 / CDC 4225-83 / SGSC4696).